The chain runs to 359 residues: UDP-N-acetylglucosamine--N-acetylmuramyl-(pentapeptide) pyrophosphoryl-undecaprenol N-acetylglucosamine transferase (359 aa).

UDP-N-acetyl-alpha-D-glucosamine contacts are provided by residues 15–17 (TGG), N127, R166, S191, I245, 264–269 (ALTVSE), and Q290.

Belongs to the glycosyltransferase 28 family. MurG subfamily.

It localises to the cell inner membrane. The enzyme catalyses di-trans,octa-cis-undecaprenyl diphospho-N-acetyl-alpha-D-muramoyl-L-alanyl-D-glutamyl-meso-2,6-diaminopimeloyl-D-alanyl-D-alanine + UDP-N-acetyl-alpha-D-glucosamine = di-trans,octa-cis-undecaprenyl diphospho-[N-acetyl-alpha-D-glucosaminyl-(1-&gt;4)]-N-acetyl-alpha-D-muramoyl-L-alanyl-D-glutamyl-meso-2,6-diaminopimeloyl-D-alanyl-D-alanine + UDP + H(+). Its pathway is cell wall biogenesis; peptidoglycan biosynthesis. In terms of biological role, cell wall formation. Catalyzes the transfer of a GlcNAc subunit on undecaprenyl-pyrophosphoryl-MurNAc-pentapeptide (lipid intermediate I) to form undecaprenyl-pyrophosphoryl-MurNAc-(pentapeptide)GlcNAc (lipid intermediate II). In Pseudomonas putida (strain ATCC 47054 / DSM 6125 / CFBP 8728 / NCIMB 11950 / KT2440), this protein is UDP-N-acetylglucosamine--N-acetylmuramyl-(pentapeptide) pyrophosphoryl-undecaprenol N-acetylglucosamine transferase.